Here is a 177-residue protein sequence, read N- to C-terminus: Adenylate kinase (177 aa).

13 to 18 contributes to the ATP binding site; that stretch reads GCGKGT. Positions 33 to 62 are NMP; the sequence is SSGDIIREEMKKSSKEATVIREMVNSGRLA. Residues Ser34, Arg39, 60–62, 85–88, and Gln92 contribute to the AMP site; these read RLA and GYPR. The interval 119–127 is LID; the sequence is GRNEGRDDD. Position 120 (Arg120) interacts with ATP. The AMP site is built by Arg124 and Arg135.

Belongs to the adenylate kinase family. Monomer.

It is found in the cytoplasm. The catalysed reaction is AMP + ATP = 2 ADP. Functionally, catalyzes the reversible transfer of the terminal phosphate group between ATP and AMP. Plays an important role in cellular energy homeostasis and in adenine nucleotide metabolism. The chain is Adenylate kinase from Encephalitozoon cuniculi (strain GB-M1) (Microsporidian parasite).